The chain runs to 122 residues: Large ribosomal subunit protein bL12 (122 aa).

Belongs to the bacterial ribosomal protein bL12 family. In terms of assembly, homodimer. Part of the ribosomal stalk of the 50S ribosomal subunit. Forms a multimeric L10(L12)X complex, where L10 forms an elongated spine to which 2 to 4 L12 dimers bind in a sequential fashion. Binds GTP-bound translation factors.

Functionally, forms part of the ribosomal stalk which helps the ribosome interact with GTP-bound translation factors. Is thus essential for accurate translation. The protein is Large ribosomal subunit protein bL12 of Cellvibrio japonicus (strain Ueda107) (Pseudomonas fluorescens subsp. cellulosa).